We begin with the raw amino-acid sequence, 312 residues long: Protein lon-1 (312 aa).

An N-terminal signal peptide occupies residues 1 to 18; it reads MNYLLTALIALLAPISVA. The region spanning 87-209 is the SCP domain; that stretch reads EHNRYRRMVP…GHRNVFVCHY (123 aa). N-linked (GlcNAc...) asparagine glycosylation occurs at Asn-142. Over residues 265–284 the composition is skewed to low complexity; the sequence is TTTTESTTTSTTTEEPTTTC. Residues 265-312 are disordered; it reads TTTTESTTTSTTTEEPTTTCEPDEPEAEGADNNQEEEEENNDGFRMRV. Positions 285-305 are enriched in acidic residues; it reads EPDEPEAEGADNNQEEEEENN.

The protein belongs to the CRISP family. Expressed in hypodermal tissues.

Functionally, regulates body size morphogenesis, but does not affect male tail development. The sequence is that of Protein lon-1 (lon-1) from Caenorhabditis elegans.